Here is a 321-residue protein sequence, read N- to C-terminus: Nod factor export ATP-binding protein I (321 aa).

The 231-residue stretch at 17 to 247 (LSVEGLRKRY…EIGCDVVEVY (231 aa)) folds into the ABC transporter domain. Position 49 to 56 (49 to 56 (GPNGAGKT)) interacts with ATP.

Belongs to the ABC transporter superfamily. Lipooligosaccharide exporter (TC 3.A.1.102) family. The complex is composed of two ATP-binding proteins (NodI) and two transmembrane proteins (NodJ).

Its subcellular location is the cell inner membrane. Part of the ABC transporter complex NodIJ involved in the export of the nodulation factors (Nod factors), the bacterial signal molecules that induce symbiosis and subsequent nodulation induction. Nod factors are LCO (lipo-chitin oligosaccharide), a modified beta-1,4-linked N-acetylglucosamine oligosaccharide. This subunit is responsible for energy coupling to the transport system. This is Nod factor export ATP-binding protein I from Ralstonia nicotianae (strain ATCC BAA-1114 / GMI1000) (Ralstonia solanacearum).